The primary structure comprises 61 residues: Large ribosomal subunit protein eL37 (61 aa).

Zn(2+) contacts are provided by Cys-19, Cys-22, Cys-34, and Cys-37. A C4-type zinc finger spans residues 19–37 (CRRCGRNSFNVRKGYCAAC).

This sequence belongs to the eukaryotic ribosomal protein eL37 family. It depends on Zn(2+) as a cofactor.

Binds to the 23S rRNA. This chain is Large ribosomal subunit protein eL37 (rpl37e), found in Sulfurisphaera tokodaii (strain DSM 16993 / JCM 10545 / NBRC 100140 / 7) (Sulfolobus tokodaii).